A 139-amino-acid chain; its full sequence is NADH-quinone oxidoreductase subunit A (139 aa).

3 helical membrane passes run 16–36 (GLFIIAVFALCALMIGAASLL), 69–89 (LVAMLFVIFDIEAVFLFAWAV), and 94–114 (VGWEGFAGAAVFIFILLAGLV).

The protein belongs to the complex I subunit 3 family. In terms of assembly, NDH-1 is composed of 14 different subunits. Subunits NuoA, H, J, K, L, M, N constitute the membrane sector of the complex.

The protein resides in the cell inner membrane. The enzyme catalyses a quinone + NADH + 5 H(+)(in) = a quinol + NAD(+) + 4 H(+)(out). Functionally, NDH-1 shuttles electrons from NADH, via FMN and iron-sulfur (Fe-S) centers, to quinones in the respiratory chain. The immediate electron acceptor for the enzyme in this species is believed to be ubiquinone. Couples the redox reaction to proton translocation (for every two electrons transferred, four hydrogen ions are translocated across the cytoplasmic membrane), and thus conserves the redox energy in a proton gradient. The protein is NADH-quinone oxidoreductase subunit A of Chromohalobacter salexigens (strain ATCC BAA-138 / DSM 3043 / CIP 106854 / NCIMB 13768 / 1H11).